The chain runs to 464 residues: Asparagine--tRNA ligase (464 aa).

This sequence belongs to the class-II aminoacyl-tRNA synthetase family. Homodimer.

Its subcellular location is the cytoplasm. It carries out the reaction tRNA(Asn) + L-asparagine + ATP = L-asparaginyl-tRNA(Asn) + AMP + diphosphate + H(+). The protein is Asparagine--tRNA ligase of Xanthomonas campestris pv. campestris (strain 8004).